Here is a 94-residue protein sequence, read N- to C-terminus: Large ribosomal subunit protein eL31 (94 aa).

The protein belongs to the eukaryotic ribosomal protein eL31 family.

The sequence is that of Large ribosomal subunit protein eL31 (rpl31e) from Pyrococcus abyssi (strain GE5 / Orsay).